A 276-amino-acid polypeptide reads, in one-letter code: Proteasome subunit beta type-8 (276 aa).

Positions 1–72 (MALLDLCGAP…RKVQIEMAHG (72 aa)) are cleaved as a propeptide — removed in mature form. The active-site Nucleophile is the Thr73.

This sequence belongs to the peptidase T1B family. The 26S proteasome consists of a 20S proteasome core and two 19S regulatory subunits. The 20S proteasome core is composed of 28 subunits that are arranged in four stacked rings, resulting in a barrel-shaped structure. The two end rings are each formed by seven alpha subunits, and the two central rings are each formed by seven beta subunits. The catalytic chamber with the active sites is on the inside of the barrel. Component of the immunoproteasome, where it displaces the equivalent housekeeping subunit PSMB5. Component of the spermatoproteasome, a form of the proteasome specifically found in testis. Directly interacts with POMP. Interacts with TAP1. Post-translationally, autocleaved. The resulting N-terminal Thr residue of the mature subunit is responsible for the nucleophile proteolytic activity.

Its subcellular location is the cytoplasm. The protein resides in the nucleus. The enzyme catalyses Cleavage of peptide bonds with very broad specificity.. In terms of biological role, the proteasome is a multicatalytic proteinase complex which is characterized by its ability to cleave peptides with Arg, Phe, Tyr, Leu, and Glu adjacent to the leaving group at neutral or slightly basic pH. The proteasome has an ATP-dependent proteolytic activity. This subunit is involved in antigen processing to generate class I binding peptides. May participate in the generation of spliced peptides resulting from the ligation of two separate proteasomal cleavage products that are not contiguous in the parental protein. Required for adipocyte differentiation. This Rattus norvegicus (Rat) protein is Proteasome subunit beta type-8 (Psmb8).